The primary structure comprises 430 residues: Spermatogenic leucine zipper protein 1 (430 aa).

The interval 1–25 (MASSAKSAEMPTISKTVNPTPDPHQ) is disordered. A coiled-coil region spans residues 62–102 (EQQTAQKFNNLLKEIKDILKNMAGFEEKITEAKELFEETNI). Serine 107 is modified (phosphoserine). Residues 166–177 (KINEMLSTNLPV) are helix-loop-helix motif. Positions 178–244 (SLAPEKEDNE…NVQEETMKIR (67 aa)) are basic motif. 2 coiled-coil regions span residues 214–269 (LEEK…KLIK) and 316–351 (SLQL…TLQE). Serine 258 carries the post-translational modification Phosphoserine. Residues 303–324 (LEEQVKKLSHDTYSLQLMAALL) are leucine-zipper.

As to quaternary structure, interacts with PPP1CC isoform gamma-2. Post-translationally, phosphorylated by MAPK1/ERK2 and MAPK3/ERK1. As to expression, specifically and strongly expressed in the testis. Expressed in several tumor cell lines.

The protein resides in the cytoplasm. The protein localises to the nucleus. Functionally, transcription factor that binds to the DNA sequence 5'-CANNTG-3'(E box) and the G-box motif. May play an important role in the regulation of cell proliferation and differentiation during spermatogenesis. This Homo sapiens (Human) protein is Spermatogenic leucine zipper protein 1 (SPZ1).